Reading from the N-terminus, the 500-residue chain is Cytochrome P450 11B3, mitochondrial (500 aa).

A mitochondrion-targeting transit peptide spans 1 to 24 (MALRVTADVWLARPWQCLHRTRAL). Residue C447 participates in heme binding.

It belongs to the cytochrome P450 family. Heme is required as a cofactor. In terms of tissue distribution, expressed in the adrenal cortex and in different brain tissues, including hippocampus, hypothalamus, cerebellum, cerebral cortex, and midbrain.

Its subcellular location is the mitochondrion membrane. It catalyses the reaction a steroid + 2 reduced [adrenodoxin] + O2 + 2 H(+) = an 11beta-hydroxysteroid + 2 oxidized [adrenodoxin] + H2O. It carries out the reaction 21-hydroxyprogesterone + 2 reduced [adrenodoxin] + O2 + 2 H(+) = corticosterone + 2 oxidized [adrenodoxin] + H2O. The enzyme catalyses 21-hydroxyprogesterone + 2 reduced [adrenodoxin] + O2 + 2 H(+) = 18-hydroxy-11-deoxycorticosterone + 2 oxidized [adrenodoxin] + H2O. The catalysed reaction is 21-hydroxyprogesterone + 2 reduced [adrenodoxin] + O2 + 2 H(+) = 19-hydroxy-11-deoxycorticosterone + 2 oxidized [adrenodoxin] + H2O. Functionally, a cytochrome P450 monooxygenase involved in the biosynthesis of adrenal corticoids. Catalyzes the hydroxylation of steroids at 11beta, 18- or 19-positions, with preferred regioselectivity at 11beta and 18. Converts 11-deoxycorticosterone into corticosterone, 18-hydroxy-11-deoxycorticosterone, and/or 19-hydroxy-11-deoxycorticosterone, but not to 18-hydroxycorticosterone or aldosterone. Mechanistically, uses molecular oxygen inserting one oxygen atom into a substrate for hydroxylation and reducing the second into a water molecule. Two electrons are provided by NADPH via a two-protein mitochondrial transfer system comprising flavoprotein FDXR (adrenodoxin/ferredoxin reductase) and nonheme iron-sulfur protein FDX1 or FDX2 (adrenodoxin/ferredoxin). The protein is Cytochrome P450 11B3, mitochondrial (Cyp11b3) of Rattus norvegicus (Rat).